The chain runs to 377 residues: Dihydroorotate dehydrogenase (quinone) (377 aa).

FMN is bound by residues A68 to K72 and T92. K72 is a binding site for substrate. Substrate is bound at residue N117 to F121. FMN-binding residues include N149 and N182. Position 182 (N182) interacts with substrate. S185 serves as the catalytic Nucleophile. Position 187 (N187) interacts with substrate. 2 residues coordinate FMN: K224 and T252. Position 253–254 (N253–T254) interacts with substrate. Residues G278, G307, and Y328–T329 each bind FMN.

It belongs to the dihydroorotate dehydrogenase family. Type 2 subfamily. Monomer. It depends on FMN as a cofactor.

The protein localises to the cell membrane. The enzyme catalyses (S)-dihydroorotate + a quinone = orotate + a quinol. Its pathway is pyrimidine metabolism; UMP biosynthesis via de novo pathway; orotate from (S)-dihydroorotate (quinone route): step 1/1. Catalyzes the conversion of dihydroorotate to orotate with quinone as electron acceptor. This chain is Dihydroorotate dehydrogenase (quinone), found in Thermobifida fusca (strain YX).